The sequence spans 612 residues: Glutamine--fructose-6-phosphate aminotransferase [isomerizing] (612 aa).

Residue C2 is the Nucleophile; for GATase activity of the active site. Residues 2 to 219 (CGIVGANSTR…EGDIAIISKD (218 aa)) form the Glutamine amidotransferase type-2 domain. 2 SIS domains span residues 287–427 (AKEL…LKNS) and 460–602 (ISEY…VDQP). K607 acts as the For Fru-6P isomerization activity in catalysis.

Homodimer.

The protein localises to the cytoplasm. The catalysed reaction is D-fructose 6-phosphate + L-glutamine = D-glucosamine 6-phosphate + L-glutamate. Functionally, catalyzes the first step in hexosamine metabolism, converting fructose-6P into glucosamine-6P using glutamine as a nitrogen source. The chain is Glutamine--fructose-6-phosphate aminotransferase [isomerizing] from Francisella tularensis subsp. tularensis (strain SCHU S4 / Schu 4).